The primary structure comprises 376 residues: Chaperone protein DnaJ (376 aa).

A J domain is found at 4–68 (DYYQLLGVAR…ETRARYDQFG (65 aa)). The CR-type zinc-finger motif lies at 135–217 (GGEKEIRVTH…CGGAGRLRRP (83 aa)). The Zn(2+) site is built by Cys148, Cys151, Cys165, Cys168, Cys191, Cys194, Cys205, and Cys208. 4 CXXCXGXG motif repeats span residues 148-155 (CGTCQGSG), 165-172 (CTTCGGAG), 191-198 (CPTCEGSG), and 205-212 (CDDCGGAG).

The protein belongs to the DnaJ family. Homodimer. The cofactor is Zn(2+).

It is found in the cytoplasm. Its function is as follows. Participates actively in the response to hyperosmotic and heat shock by preventing the aggregation of stress-denatured proteins and by disaggregating proteins, also in an autonomous, DnaK-independent fashion. Unfolded proteins bind initially to DnaJ; upon interaction with the DnaJ-bound protein, DnaK hydrolyzes its bound ATP, resulting in the formation of a stable complex. GrpE releases ADP from DnaK; ATP binding to DnaK triggers the release of the substrate protein, thus completing the reaction cycle. Several rounds of ATP-dependent interactions between DnaJ, DnaK and GrpE are required for fully efficient folding. Also involved, together with DnaK and GrpE, in the DNA replication of plasmids through activation of initiation proteins. This chain is Chaperone protein DnaJ, found in Synechococcus sp. (strain ATCC 27144 / PCC 6301 / SAUG 1402/1) (Anacystis nidulans).